Consider the following 604-residue polypeptide: MNIVQNSIFLSNLLRSSPVFELKYDHSCELYRMSTYSTFPAGVPVSERSLARAGFYYTGAKDRVRCFCCGLMLDNWKAGDSPTGKHRNLYPSCSFIQNLSAVSTVGAASQPPAPLSEARSTHAQSPGLERSSYFSASYSSFPVDPVDFRPSPAMSPWRAGPSCVTMKSEEDRLCTFQGWPLAFPLPSALARAGFYYVGPGDRVACFACGGKLSNWEPDDDALSEHLRHFPDCPFVEGQLQATVRYTASNLSMQTLAARSRTFCNWPPRAPVHPEQLASAGFYYMGHSDDVKCFCCDGGLRCWESGDDPWVEHAKWFPRCEYLIRIKGQEFISQIQASYPHLLEQLLSTSDNTEDENTESPIVHFGPGEYHSEDAVMMNTPVVMAALEMGFSRSLVRQTVQSKILSTGENYRTVNEIVSDLLHVEDEIREEEKERAAENRESDDVSLIRKNKMVLFQHLTYVLPILDSLLMAGVLNEQEHSSIKQKARTSLQARELIDTVLVKGSSAVTIFKNSLQEIDPMLYKRFFVQQDRKYIPTEDISDLPVEEQLRRLQEERTCKVCMDKEVSIVFIPCGHLVVCRDCAPSLRKCPICRGTVRGTVRTFLS.

The BIR 1 repeat unit spans residues 29–96 (ELYRMSTYST…RNLYPSCSFI (68 aa)). Arg-130 carries the post-translational modification Omega-N-methylarginine. Ser-140 is modified (phosphoserine). BIR repeat units lie at residues 169 to 235 (EEDR…CPFV) and 255 to 322 (LAAR…CEYL). 4 residues coordinate Zn(2+): Cys-292, Cys-295, His-312, and Cys-319. The region spanning 439-529 (RESDDVSLIR…MLYKRFFVQQ (91 aa)) is the CARD domain. An RING-type zinc finger spans residues 557-592 (CKVCMDKEVSIVFIPCGHLVVCRDCAPSLRKCPICR).

This sequence belongs to the IAP family. Interacts with PRSS25; the interaction inhibits apoptotic suppressor activity. The BIR motifs region interacts with TNF receptor associated factors 1 and 2 (TRAF1 and TRAF2) to form a heteromeric complex, which is then recruited to the tumor necrosis factor receptor 2 (TNFR2). Interaction with TRAF2 is required for ubiquitination of IKBKE, degradation of NFKBIA and activation of NF-kappa-B. Interacts with RIP1, RIP2, RIP3, RIP4 and USP19. Auto-ubiquitinated and degraded by the proteasome in apoptotic cells.

Its subcellular location is the cytoplasm. It localises to the nucleus. It catalyses the reaction S-ubiquitinyl-[E2 ubiquitin-conjugating enzyme]-L-cysteine + [acceptor protein]-L-lysine = [E2 ubiquitin-conjugating enzyme]-L-cysteine + N(6)-ubiquitinyl-[acceptor protein]-L-lysine.. USP19 regulates the stability of BIRC3/c-IAP2 by preventing its ubiquitination. Its function is as follows. Multi-functional protein which regulates not only caspases and apoptosis, but also modulates inflammatory signaling and immunity, mitogenic kinase signaling and cell proliferation, as well as cell invasion and metastasis. Acts as an E3 ubiquitin-protein ligase regulating NF-kappa-B signaling and regulates both canonical and non-canonical NF-kappa-B signaling by acting in opposite directions: acts as a positive regulator of the canonical pathway and suppresses constitutive activation of non-canonical NF-kappa-B signaling. The target proteins for its E3 ubiquitin-protein ligase activity include: RIPK1, RIPK2, RIPK3, RIPK4, CASP3, CASP7, CASP8, IKBKE, TRAF1, and BCL10. Acts as an important regulator of innate immune signaling via regulation of Toll-like receptors (TLRs), Nodlike receptors (NLRs) and RIG-I like receptors (RLRs), collectively referred to as pattern recognition receptors (PRRs). Protects cells from spontaneous formation of the ripoptosome, a large multi-protein complex that has the capability to kill cancer cells in a caspase-dependent and caspase-independent manner. Suppresses ripoptosome formation by ubiquitinating RIPK1 and CASP8. The chain is Baculoviral IAP repeat-containing protein 3 (BIRC3) from Canis lupus familiaris (Dog).